Consider the following 439-residue polypeptide: ATP-dependent RNA helicase SUB2 (439 aa).

Over residues 1-19 (MSHEGEEDLLEYSDNEQEI) the composition is skewed to acidic residues. The disordered stretch occupies residues 1–48 (MSHEGEEDLLEYSDNEQEIQVDNKETAVEGTTENEATQENGEADKKGS). Positions 29 to 40 (EGTTENEATQEN) are enriched in polar residues. A Q motif motif is present at residues 55–83 (TGFKDFLLKPELSRAIIDCGFEHPSEVQQ). Positions 86-261 (IPQSIHGTDV…RRFLQNPLEI (176 aa)) constitute a Helicase ATP-binding domain. Position 99–106 (99–106 (AKSGLGKT)) interacts with ATP. The short motif at 208 to 211 (DECD) is the DECD box element. A Helicase C-terminal domain is found at 273–434 (GLQQYYIKLE…EFPEEGIDPS (162 aa)).

The protein belongs to the DEAD box helicase family. DECD subfamily.

The protein localises to the nucleus. The enzyme catalyses ATP + H2O = ADP + phosphate + H(+). Its function is as follows. ATP-binding RNA helicase involved in transcription elongation and required for the export of mRNA out of the nucleus. SUB2 also plays a role in pre-mRNA splicing and spliceosome assembly. May be involved in rDNA and telomeric silencing, and maintenance of genome integrity. This is ATP-dependent RNA helicase SUB2 (SUB2) from Candida glabrata (strain ATCC 2001 / BCRC 20586 / JCM 3761 / NBRC 0622 / NRRL Y-65 / CBS 138) (Yeast).